The sequence spans 208 residues: Imidazoleglycerol-phosphate dehydratase (208 aa).

It belongs to the imidazoleglycerol-phosphate dehydratase family.

It is found in the cytoplasm. It catalyses the reaction D-erythro-1-(imidazol-4-yl)glycerol 3-phosphate = 3-(imidazol-4-yl)-2-oxopropyl phosphate + H2O. It functions in the pathway amino-acid biosynthesis; L-histidine biosynthesis; L-histidine from 5-phospho-alpha-D-ribose 1-diphosphate: step 6/9. In Prochlorococcus marinus (strain MIT 9211), this protein is Imidazoleglycerol-phosphate dehydratase.